Consider the following 743-residue polypeptide: Mitochondrial exoribonuclease DSS-1 (743 aa).

The transit peptide at 1–67 directs the protein to the mitochondrion; it reads MTPRRVAKLV…KELLHLQRSL (67 aa). The RNB domain occupies 186–542; it reads THNPAYAIDS…VHHQLKVWLW (357 aa). The segment at 320–357 is disordered; that stretch reads VGNQHHHTERESTQASPAKREEGKKGMVASGGTSSCRP. Basic and acidic residues predominate over residues 325–344; the sequence is HHTERESTQASPAKREEGKK.

Belongs to the RNR ribonuclease family. Component of the mitochondrial 3' processome (MPsome) complex composed at least of terminal uridylyltransferase KRET1/TUT1, 3'-5' exonuclease DSS1, MPSS1, MPSS2 and MPSS3. Within the complex, interacts with KRET1 and MPSS2. Component of the mitochondrial degradosome complex composed at least of 3'-5' exonuclease DSS1 and helicase SUV3. Within the complex, interacts with helicase SUV3.

Its subcellular location is the mitochondrion. It catalyses the reaction Exonucleolytic cleavage in the 3'- to 5'-direction to yield nucleoside 5'-phosphates.. Functionally, 3'-5'exoribonuclease which is involved in the post-transcriptional processing, editing and degradation of mitochondrial RNAs, including mRNAs, rRNAs and guided RNAs (gRNA). As part of the mitochondrial 3' processome (MPsome), involved in the maturation of guided RNA (gRNA) precursors by catalyzing the processive 3'-5' degradation of uridylated gRNA precursors. Plays a role in the degradation of 12S rRNA processing intermediates and maturation by-products. This Trypanosoma brucei brucei protein is Mitochondrial exoribonuclease DSS-1.